We begin with the raw amino-acid sequence, 371 residues long: Cytoplasmic tRNA 2-thiolation protein 1 (371 aa).

The protein belongs to the TtcA family. CTU1/NCS6/ATPBD3 subfamily.

It is found in the cytoplasm. The protein operates within tRNA modification; 5-methoxycarbonylmethyl-2-thiouridine-tRNA biosynthesis. Plays a central role in 2-thiolation of mcm(5)S(2)U at tRNA wobble positions of tRNA(Lys), tRNA(Glu) and tRNA(Gln). Directly binds tRNAs and probably acts by catalyzing adenylation of tRNAs, an intermediate required for 2-thiolation. It is unclear whether it acts as a sulfurtransferase that transfers sulfur from thiocarboxylated URM1 onto the uridine of tRNAs at wobble position. Prior mcm(5) tRNA modification by the elongator complex is required for 2-thiolation. May also be involved in protein urmylation. The chain is Cytoplasmic tRNA 2-thiolation protein 1 from Kluyveromyces lactis (strain ATCC 8585 / CBS 2359 / DSM 70799 / NBRC 1267 / NRRL Y-1140 / WM37) (Yeast).